The chain runs to 366 residues: 3-isopropylmalate dehydrogenase (366 aa).

78–91 (GPQWTHLKGSESPE) provides a ligand contact to NAD(+). Arg99, Arg109, Arg138, and Asp227 together coordinate substrate. Residues Asp227, Asp251, and Asp255 each coordinate Mg(2+). 285–297 (GSAPDIAEKNIAN) serves as a coordination point for NAD(+).

Belongs to the isocitrate and isopropylmalate dehydrogenases family. LeuB type 1 subfamily. In terms of assembly, homodimer. It depends on Mg(2+) as a cofactor. Mn(2+) is required as a cofactor.

It localises to the cytoplasm. It carries out the reaction (2R,3S)-3-isopropylmalate + NAD(+) = 4-methyl-2-oxopentanoate + CO2 + NADH. It functions in the pathway amino-acid biosynthesis; L-leucine biosynthesis; L-leucine from 3-methyl-2-oxobutanoate: step 3/4. Functionally, catalyzes the oxidation of 3-carboxy-2-hydroxy-4-methylpentanoate (3-isopropylmalate) to 3-carboxy-4-methyl-2-oxopentanoate. The product decarboxylates to 4-methyl-2 oxopentanoate. In Blochmanniella pennsylvanica (strain BPEN), this protein is 3-isopropylmalate dehydrogenase.